Reading from the N-terminus, the 3916-residue chain is Fusarin C synthetase (3916 aa).

Residues 9–440 (KEPIAIIGTS…GTNVHAIIEQ (432 aa)) form the Ketosynthase family 3 (KS3) domain. Catalysis depends on for beta-ketoacyl synthase activity residues C182, H319, and H360. The malonyl-CoA:ACP transacylase (MAT) domain stretch occupies residues 548–866 (VFTGQGAQWP…QGTVARNIHD (319 aa)). Residues 935–1068 (HPLLGARSVE…GQLRVEFGCS (134 aa)) are N-terminal hotdog fold. Positions 935–1228 (HPLLGARSVE…GLTCTSLLRP (294 aa)) are dehydratase (DH) domain. In terms of domain architecture, PKS/mFAS DH spans 935–1231 (HPLLGARSVE…CTSLLRPGPS (297 aa)). H967 acts as the Proton acceptor; for dehydratase activity in catalysis. Residues 1084–1231 (LTSVNMERFY…CTSLLRPGPS (148 aa)) are C-terminal hotdog fold. Residue D1141 is the Proton donor; for dehydratase activity of the active site. The C-methyltransferase (CMeT) domain stretch occupies residues 1347–1575 (IQAVGENLPS…VNDFVDAEKY (229 aa)). The ketoreductase (KR) domain 1 stretch occupies residues 2092–2266 (TYLLIGCTGG…AASVMHIGMV (175 aa)). The Carrier 1 domain maps to 2372 to 2449 (EILAVVEEEF…ELCSTVVSHL (78 aa)). An O-(pantetheine 4'-phosphoryl)serine modification is found at S2409. The tract at residues 2487–2510 (NEPFTIRNSPNSTQVTSEAGVDED) is disordered. The segment covering 2492-2503 (IRNSPNSTQVTS) has biased composition (polar residues). A condensation region spans residues 2522–2806 (PLSFAQERLW…VNLLPLRLKI (285 aa)). The tract at residues 2975-3385 (EFVVKQPDDT…RIAGDSQIKL (411 aa)) is adenylation. Residues 3493–3570 (KPLTETQERL…EMAAKIDGST (78 aa)) form the Carrier 2 domain. At S3530 the chain carries O-(pantetheine 4'-phosphoryl)serine. The segment at 3612-3833 (LTGATGFLGV…DFVPVDVVAA (222 aa)) is thiolester reductase (R) domain.

It in the C-terminal section; belongs to the NRP synthetase family.

It participates in mycotoxin biosynthesis. In terms of biological role, fusarin C synthetase; part of the gene cluster that mediates the biosynthesis of the mycotoxin fusarin C. Within the cluster, FUS1, FUS2, FUS8 and FUS9 are sufficient for fusarin production. The roles of the other FUS members are yet undetermined. The fusarin C synthetase FUS1 is responsible for the condensation of one acetyl-coenzyme A (CoA) unit with six malonyl-CoA units and the amide linkage of the arising heptaketide and homoserine, subsequently releasing the first intermediate, prefusarin, as an alcohol with an open ring structure. The cytochrome P450 monooxygenase FUS8 participates in multiple oxidation processes at carbon C-20 and is able to use the FUS1 product as substrate, resulting in formation of 20-hydroxy-prefusarin. This reaction seems to be essential before the 2-pyrrolidone ring closure can be catalyzed by FUS2, generating 20-hydroxy-fusarin. FUS8 is able to further oxidizes carbon C-20 after ring closure, resulting in the formation of carboxy-fusarin C. As the last step, FUS9 methylates the hydroxyl group at C-21 to generate fusarin C. Fusarin C can then rearrange to epi-fusarin C, the (z)-isomers, and fusarin A and fusarin D. This chain is Fusarin C synthetase, found in Gibberella fujikuroi (strain CBS 195.34 / IMI 58289 / NRRL A-6831) (Bakanae and foot rot disease fungus).